Reading from the N-terminus, the 298-residue chain is UDP-3-O-acyl-N-acetylglucosamine deacetylase (298 aa).

Zn(2+) contacts are provided by histidine 79, histidine 239, and aspartate 243. Histidine 266 (proton donor) is an active-site residue.

This sequence belongs to the LpxC family. The cofactor is Zn(2+).

It carries out the reaction a UDP-3-O-[(3R)-3-hydroxyacyl]-N-acetyl-alpha-D-glucosamine + H2O = a UDP-3-O-[(3R)-3-hydroxyacyl]-alpha-D-glucosamine + acetate. It participates in glycolipid biosynthesis; lipid IV(A) biosynthesis; lipid IV(A) from (3R)-3-hydroxytetradecanoyl-[acyl-carrier-protein] and UDP-N-acetyl-alpha-D-glucosamine: step 2/6. Its function is as follows. Catalyzes the hydrolysis of UDP-3-O-myristoyl-N-acetylglucosamine to form UDP-3-O-myristoylglucosamine and acetate, the committed step in lipid A biosynthesis. The protein is UDP-3-O-acyl-N-acetylglucosamine deacetylase of Wigglesworthia glossinidia brevipalpis.